A 315-amino-acid chain; its full sequence is Putative methyltransferase NSUN5C (315 aa).

S-adenosyl-L-methionine is bound by residues 50-56 (VPPQAIK), Asp-74, Arg-79, and Asp-121. The active-site Nucleophile is the Cys-175. A disordered region spans residues 245-269 (TSASQAKASAPERTPSPAPKRKKRA).

It belongs to the class I-like SAM-binding methyltransferase superfamily. RsmB/NOP family. As to expression, ubiquitous.

Functionally, may have S-adenosyl-L-methionine-dependent methyl-transferase activity. The sequence is that of Putative methyltransferase NSUN5C (NSUN5P2) from Homo sapiens (Human).